We begin with the raw amino-acid sequence, 481 residues long: Glutamyl-tRNA(Gln) amidotransferase subunit A (481 aa).

Active-site charge relay system residues include Lys76 and Ser151. Ser175 functions as the Acyl-ester intermediate in the catalytic mechanism.

The protein belongs to the amidase family. GatA subfamily. Heterotrimer of A, B and C subunits.

It carries out the reaction L-glutamyl-tRNA(Gln) + L-glutamine + ATP + H2O = L-glutaminyl-tRNA(Gln) + L-glutamate + ADP + phosphate + H(+). Allows the formation of correctly charged Gln-tRNA(Gln) through the transamidation of misacylated Glu-tRNA(Gln) in organisms which lack glutaminyl-tRNA synthetase. The reaction takes place in the presence of glutamine and ATP through an activated gamma-phospho-Glu-tRNA(Gln). The chain is Glutamyl-tRNA(Gln) amidotransferase subunit A from Chlorobaculum parvum (strain DSM 263 / NCIMB 8327) (Chlorobium vibrioforme subsp. thiosulfatophilum).